The following is a 317-amino-acid chain: tRNA uridine(34) hydroxylase (317 aa).

In terms of domain architecture, Rhodanese spans E123 to E217. Residue C177 is the Cysteine persulfide intermediate of the active site.

Belongs to the TrhO family.

The catalysed reaction is uridine(34) in tRNA + AH2 + O2 = 5-hydroxyuridine(34) in tRNA + A + H2O. Its function is as follows. Catalyzes oxygen-dependent 5-hydroxyuridine (ho5U) modification at position 34 in tRNAs. The chain is tRNA uridine(34) hydroxylase from Staphylococcus carnosus (strain TM300).